Reading from the N-terminus, the 182-residue chain is Probable nicotinate-nucleotide adenylyltransferase (182 aa).

Belongs to the NadD family.

It catalyses the reaction nicotinate beta-D-ribonucleotide + ATP + H(+) = deamido-NAD(+) + diphosphate. The protein operates within cofactor biosynthesis; NAD(+) biosynthesis; deamido-NAD(+) from nicotinate D-ribonucleotide: step 1/1. Catalyzes the reversible adenylation of nicotinate mononucleotide (NaMN) to nicotinic acid adenine dinucleotide (NaAD). The chain is Probable nicotinate-nucleotide adenylyltransferase from Aliarcobacter butzleri (strain RM4018) (Arcobacter butzleri).